Reading from the N-terminus, the 200-residue chain is ATP-dependent Clp protease proteolytic subunit (200 aa).

S98 functions as the Nucleophile in the catalytic mechanism. Residue H123 is part of the active site.

This sequence belongs to the peptidase S14 family. As to quaternary structure, fourteen ClpP subunits assemble into 2 heptameric rings which stack back to back to give a disk-like structure with a central cavity, resembling the structure of eukaryotic proteasomes.

It localises to the cytoplasm. It carries out the reaction Hydrolysis of proteins to small peptides in the presence of ATP and magnesium. alpha-casein is the usual test substrate. In the absence of ATP, only oligopeptides shorter than five residues are hydrolyzed (such as succinyl-Leu-Tyr-|-NHMec, and Leu-Tyr-Leu-|-Tyr-Trp, in which cleavage of the -Tyr-|-Leu- and -Tyr-|-Trp bonds also occurs).. Functionally, cleaves peptides in various proteins in a process that requires ATP hydrolysis. Has a chymotrypsin-like activity. Plays a major role in the degradation of misfolded proteins. The sequence is that of ATP-dependent Clp protease proteolytic subunit from Ehrlichia canis (strain Jake).